We begin with the raw amino-acid sequence, 308 residues long: Protein translocase subunit SecF (308 aa).

6 helical membrane passes run A22–Y42, I140–V160, W164–F184, L194–I214, I246–A266, and V272–I292.

Belongs to the SecD/SecF family. SecF subfamily. In terms of assembly, forms a complex with SecD. Part of the essential Sec protein translocation apparatus which comprises SecA, SecYEG and auxiliary proteins SecDF-YajC and YidC.

It is found in the cell inner membrane. Functionally, part of the Sec protein translocase complex. Interacts with the SecYEG preprotein conducting channel. SecDF uses the proton motive force (PMF) to complete protein translocation after the ATP-dependent function of SecA. This chain is Protein translocase subunit SecF, found in Rickettsia akari (strain Hartford).